The sequence spans 735 residues: Catalase-peroxidase (735 aa).

The span at 1-10 shows a compositional bias: polar residues; it reads MMDGAQTNSG. The segment at 1-20 is disordered; it reads MMDGAQTNSGGCPVMHGGGS. A cross-link (tryptophyl-tyrosyl-methioninium (Trp-Tyr) (with M-254)) is located at residues 100 to 228; that stretch reads WHSAGTYRTY…LAAVQMGLIY (129 aa). The active-site Proton acceptor is histidine 101. Positions 228–254 form a cross-link, tryptophyl-tyrosyl-methioninium (Tyr-Met) (with W-100); that stretch reads YVNPQGPDGNPDPLASAFDIRDTFARM. Residue histidine 269 participates in heme b binding.

This sequence belongs to the peroxidase family. Peroxidase/catalase subfamily. Homodimer or homotetramer. The cofactor is heme b. Formation of the three residue Trp-Tyr-Met cross-link is important for the catalase, but not the peroxidase activity of the enzyme.

It catalyses the reaction H2O2 + AH2 = A + 2 H2O. The enzyme catalyses 2 H2O2 = O2 + 2 H2O. Its function is as follows. Bifunctional enzyme with both catalase and broad-spectrum peroxidase activity. In Jannaschia sp. (strain CCS1), this protein is Catalase-peroxidase.